The chain runs to 442 residues: Cytokine receptor-like factor 3 (442 aa).

Positions 10-46 (EVLLQEARENVEAAQSYRRELGQRLQGLREAQRQIKE) form a coiled coil. A Fibronectin type-III domain is found at 181–274 (PPVQIEELIE…PQTGHSTLVP (94 aa)).

The protein belongs to the cytokine receptor-like factor 3 family.

It localises to the cytoplasm. Functionally, may play a role in the negative regulation of cell cycle progression. This is Cytokine receptor-like factor 3 (Crlf3) from Mus musculus (Mouse).